The chain runs to 214 residues: Ribosomal RNA small subunit methyltransferase G (214 aa).

S-adenosyl-L-methionine contacts are provided by residues glycine 58, 109–110 (AE), and arginine 126.

Belongs to the methyltransferase superfamily. RNA methyltransferase RsmG family.

Its subcellular location is the cytoplasm. Specifically methylates the N7 position of a guanine in 16S rRNA. This Ureaplasma parvum serovar 3 (strain ATCC 700970) protein is Ribosomal RNA small subunit methyltransferase G.